Consider the following 206-residue polypeptide: Probable nicotinate-nucleotide adenylyltransferase (206 aa).

This sequence belongs to the NadD family.

The catalysed reaction is nicotinate beta-D-ribonucleotide + ATP + H(+) = deamido-NAD(+) + diphosphate. The protein operates within cofactor biosynthesis; NAD(+) biosynthesis; deamido-NAD(+) from nicotinate D-ribonucleotide: step 1/1. Functionally, catalyzes the reversible adenylation of nicotinate mononucleotide (NaMN) to nicotinic acid adenine dinucleotide (NaAD). The sequence is that of Probable nicotinate-nucleotide adenylyltransferase from Gloeobacter violaceus (strain ATCC 29082 / PCC 7421).